The following is a 182-amino-acid chain: Isopentenyl-diphosphate Delta-isomerase (182 aa).

His25 and His32 together coordinate Mn(2+). The region spanning 30–164 (LLHLAFSSWL…PWAFSPWMVM (135 aa)) is the Nudix hydrolase domain. Residue Cys67 is part of the active site. Mn(2+) is bound at residue His69. Glu87 contributes to the Mg(2+) binding site. Mn(2+)-binding residues include Glu114 and Glu116. Glu116 is a catalytic residue.

It belongs to the IPP isomerase type 1 family. In terms of assembly, homodimer. It depends on Mg(2+) as a cofactor. Mn(2+) is required as a cofactor.

Its subcellular location is the cytoplasm. It catalyses the reaction isopentenyl diphosphate = dimethylallyl diphosphate. The protein operates within isoprenoid biosynthesis; dimethylallyl diphosphate biosynthesis; dimethylallyl diphosphate from isopentenyl diphosphate: step 1/1. Its function is as follows. Catalyzes the 1,3-allylic rearrangement of the homoallylic substrate isopentenyl (IPP) to its highly electrophilic allylic isomer, dimethylallyl diphosphate (DMAPP). The sequence is that of Isopentenyl-diphosphate Delta-isomerase from Escherichia coli (strain ATCC 8739 / DSM 1576 / NBRC 3972 / NCIMB 8545 / WDCM 00012 / Crooks).